A 253-amino-acid polypeptide reads, in one-letter code: Probable transcriptional regulatory protein TM_0466 (253 aa).

It belongs to the TACO1 family.

The protein localises to the cytoplasm. The protein is Probable transcriptional regulatory protein TM_0466 of Thermotoga maritima (strain ATCC 43589 / DSM 3109 / JCM 10099 / NBRC 100826 / MSB8).